Consider the following 359-residue polypeptide: Peptide chain release factor 1 (359 aa).

N5-methylglutamine is present on Gln-235.

Belongs to the prokaryotic/mitochondrial release factor family. In terms of processing, methylated by PrmC. Methylation increases the termination efficiency of RF1.

Its subcellular location is the cytoplasm. Peptide chain release factor 1 directs the termination of translation in response to the peptide chain termination codons UAG and UAA. The protein is Peptide chain release factor 1 of Polynucleobacter asymbioticus (strain DSM 18221 / CIP 109841 / QLW-P1DMWA-1) (Polynucleobacter necessarius subsp. asymbioticus).